The following is a 514-amino-acid chain: Cytochrome P450 monooxygenase MO6277 (514 aa).

A helical transmembrane segment spans residues 6–26; that stretch reads LTVLALLGGTLLLYCSGLVIY. Cys-457 contacts heme.

The protein belongs to the cytochrome P450 family. It depends on heme as a cofactor.

The protein localises to the membrane. The catalysed reaction is polyporic acid + reduced [NADPH--hemoprotein reductase] + O2 = ascocorynin + oxidized [NADPH--hemoprotein reductase] + H2O + H(+). It functions in the pathway secondary metabolite biosynthesis. Cytochrome P450 monooxygenase that hydroxylates polyporic acid produced by the nonribosomal peptide synthetase acyN to produce the less toxic metabolite ascocorynin. The hydrophobic substrate polyporic acid might approach the active site from the membrane and, after hydroxylation into ascocorynin, leaves into the cytoplasm. MO6277 appears vital to avoid high-level accumulation of polyporic acid in the fungal membrane. This Ascocoryne sarcoides (Purple jellydisc fungus) protein is Cytochrome P450 monooxygenase MO6277.